Here is a 76-residue protein sequence, read N- to C-terminus: Large ribosomal subunit protein bL31 (76 aa).

This sequence belongs to the bacterial ribosomal protein bL31 family. Type A subfamily. As to quaternary structure, part of the 50S ribosomal subunit.

Its function is as follows. Binds the 23S rRNA. This Beijerinckia indica subsp. indica (strain ATCC 9039 / DSM 1715 / NCIMB 8712) protein is Large ribosomal subunit protein bL31.